The primary structure comprises 331 residues: UDP-galactose/UDP-glucose transporter 3 (331 aa).

The next 8 helical transmembrane spans lie at 11-31, 49-69, 80-100, 112-132, 135-155, 170-190, 206-226, and 245-265; these read VLLL…QGIL, HLAF…YIMI, APWW…AMGI, VLAK…VYGI, TLPE…FALL, APLG…TNAT, IMLG…FGLP, and WDIL…FLTI. The Di-lysine motif motif lies at 327–331; that stretch reads KKKKA.

The protein belongs to the nucleotide-sugar transporter family. UDP-galactose:UMP antiporter (TC 2.A.7.11) subfamily. In terms of tissue distribution, mostly expressed in flowers, and, to a lower extent, in roots, stems and leaves.

The protein resides in the endoplasmic reticulum membrane. The protein localises to the golgi apparatus membrane. Essential sugar transporter required for the transport of UDP-glucose from the cytoplasm into the Golgi and the endoplasmic reticulum. Essential for pollen development and involved in embryo sac progress. This chain is UDP-galactose/UDP-glucose transporter 3, found in Arabidopsis thaliana (Mouse-ear cress).